A 435-amino-acid polypeptide reads, in one-letter code: tRNA-2-methylthio-N(6)-dimethylallyladenosine synthase (435 aa).

An MTTase N-terminal domain is found at lysine 2–asparagine 117. [4Fe-4S] cluster contacts are provided by cysteine 11, cysteine 47, cysteine 80, cysteine 154, cysteine 158, and cysteine 161. The Radical SAM core domain maps to phenylalanine 140–tyrosine 370. The TRAM domain occupies serine 373–valine 435.

This sequence belongs to the methylthiotransferase family. MiaB subfamily. In terms of assembly, monomer. [4Fe-4S] cluster serves as cofactor.

Its subcellular location is the cytoplasm. The catalysed reaction is N(6)-dimethylallyladenosine(37) in tRNA + (sulfur carrier)-SH + AH2 + 2 S-adenosyl-L-methionine = 2-methylsulfanyl-N(6)-dimethylallyladenosine(37) in tRNA + (sulfur carrier)-H + 5'-deoxyadenosine + L-methionine + A + S-adenosyl-L-homocysteine + 2 H(+). In terms of biological role, catalyzes the methylthiolation of N6-(dimethylallyl)adenosine (i(6)A), leading to the formation of 2-methylthio-N6-(dimethylallyl)adenosine (ms(2)i(6)A) at position 37 in tRNAs that read codons beginning with uridine. The chain is tRNA-2-methylthio-N(6)-dimethylallyladenosine synthase from Fusobacterium nucleatum subsp. nucleatum (strain ATCC 25586 / DSM 15643 / BCRC 10681 / CIP 101130 / JCM 8532 / KCTC 2640 / LMG 13131 / VPI 4355).